The following is a 222-amino-acid chain: Thymidylate kinase (222 aa).

An ATP-binding site is contributed by 10-17; the sequence is GLEGAGKS.

It belongs to the thymidylate kinase family.

It carries out the reaction dTMP + ATP = dTDP + ADP. Phosphorylation of dTMP to form dTDP in both de novo and salvage pathways of dTTP synthesis. The sequence is that of Thymidylate kinase from Alteromonas mediterranea (strain DSM 17117 / CIP 110805 / LMG 28347 / Deep ecotype).